Consider the following 629-residue polypeptide: Filament-like plant protein 2 (629 aa).

Coiled coils occupy residues 34 to 61 (WEKA…LEDR) and 102 to 171 (NTGL…LEAE). The segment at 186–205 (SSNQSVDSHSDGGRERVEGS) is disordered. The segment covering 193–203 (SHSDGGRERVE) has biased composition (basic and acidic residues). Residues 270 to 493 (ELSLMEKLEK…IEEKTMIKRE (224 aa)) adopt a coiled-coil conformation.

It belongs to the FPP family. Interacts with WPP/MAF proteins. Binds to COG2; this interaction promotes the association between cortical microtubules and EXO70A1. In terms of tissue distribution, accumulates in preferentially xylem cells.

Its subcellular location is the vesicle. In terms of biological role, ensures, when in complex with FPP3/VETH1 and COG2, the correct secondary cell wall (SCW) deposition pattern by recruiting exocyst components to cortical microtubules in xylem cells during secondary cell wall deposition by recruiting EXO70A1. This Arabidopsis thaliana (Mouse-ear cress) protein is Filament-like plant protein 2.